A 98-amino-acid polypeptide reads, in one-letter code: Putative protein adenylyltransferase MJ0126 (98 aa).

A GSX(10)DXD motif motif is present at residues 31-45; the sequence is GSYARNEQTETSDID. Mg(2+) is bound by residues Asp-43, Asp-45, and Asp-75.

Belongs to the MntA antitoxin family. As to quaternary structure, probably forms a complex with cognate toxin MJ0125. Mg(2+) serves as cofactor.

The catalysed reaction is L-tyrosyl-[protein] + ATP = O-(5'-adenylyl)-L-tyrosyl-[protein] + diphosphate. It carries out the reaction O-(5'-adenylyl)-L-tyrosyl-[protein] + ATP = O-[5'-(adenylyl-(5'-&gt;3')-adenylyl)]-L-tyrosyl-[protein] + diphosphate. In terms of biological role, probable antitoxin component of a putative type VII toxin-antitoxin (TA) system. Neutralizes cognate toxic MJ0125 by di-AMPylation. The chain is Putative protein adenylyltransferase MJ0126 from Methanocaldococcus jannaschii (strain ATCC 43067 / DSM 2661 / JAL-1 / JCM 10045 / NBRC 100440) (Methanococcus jannaschii).